Consider the following 157-residue polypeptide: Protein E6 (157 aa).

Zinc fingers lie at residues 39–75 and 112–148; these read CNFC…CRSC and CQTC…CRQC.

It belongs to the papillomaviridae E6 protein family. As to quaternary structure, forms homodimers. Interacts with ubiquitin-protein ligase UBE3A/E6-AP; this interaction stimulates UBE3A ubiquitin activity. Interacts with host BAK1.

Its subcellular location is the host cytoplasm. It localises to the host nucleus. Its function is as follows. Plays a major role in the induction and maintenance of cellular transformation. E6 associates with host UBE3A/E6-AP ubiquitin-protein ligase and modulates its activity. Protects host keratinocytes from apoptosis by mediating the degradation of host BAK1. May also inhibit host immune response. This Homo sapiens (Human) protein is Protein E6.